The primary structure comprises 298 residues: Acetylglutamate kinase (298 aa).

Residues 68-69 (GG), R90, and N195 each bind substrate.

This sequence belongs to the acetylglutamate kinase family. ArgB subfamily.

It is found in the cytoplasm. It catalyses the reaction N-acetyl-L-glutamate + ATP = N-acetyl-L-glutamyl 5-phosphate + ADP. Its pathway is amino-acid biosynthesis; L-arginine biosynthesis; N(2)-acetyl-L-ornithine from L-glutamate: step 2/4. Functionally, catalyzes the ATP-dependent phosphorylation of N-acetyl-L-glutamate. The sequence is that of Acetylglutamate kinase from Hydrogenovibrio crunogenus (strain DSM 25203 / XCL-2) (Thiomicrospira crunogena).